Reading from the N-terminus, the 369-residue chain is Anhydro-N-acetylmuramic acid kinase (369 aa).

ATP is bound at residue 12–19 (GTSLDGVD).

It belongs to the anhydro-N-acetylmuramic acid kinase family.

The enzyme catalyses 1,6-anhydro-N-acetyl-beta-muramate + ATP + H2O = N-acetyl-D-muramate 6-phosphate + ADP + H(+). The protein operates within amino-sugar metabolism; 1,6-anhydro-N-acetylmuramate degradation. Its pathway is cell wall biogenesis; peptidoglycan recycling. Functionally, catalyzes the specific phosphorylation of 1,6-anhydro-N-acetylmuramic acid (anhMurNAc) with the simultaneous cleavage of the 1,6-anhydro ring, generating MurNAc-6-P. Is required for the utilization of anhMurNAc either imported from the medium or derived from its own cell wall murein, and thus plays a role in cell wall recycling. This Shigella flexneri serotype 5b (strain 8401) protein is Anhydro-N-acetylmuramic acid kinase.